We begin with the raw amino-acid sequence, 143 residues long: Large ribosomal subunit protein uL11 (143 aa).

The protein belongs to the universal ribosomal protein uL11 family. Part of the ribosomal stalk of the 50S ribosomal subunit. Interacts with L10 and the large rRNA to form the base of the stalk. L10 forms an elongated spine to which L12 dimers bind in a sequential fashion forming a multimeric L10(L12)X complex. One or more lysine residues are methylated.

Forms part of the ribosomal stalk which helps the ribosome interact with GTP-bound translation factors. The chain is Large ribosomal subunit protein uL11 from Allorhizobium ampelinum (strain ATCC BAA-846 / DSM 112012 / S4) (Agrobacterium vitis (strain S4)).